Here is a 660-residue protein sequence, read N- to C-terminus: Pescadillo homolog (660 aa).

Disordered regions lie at residues 313–358 (VESD…SYSS) and 471–660 (PELY…EKKA). Positions 331–342 (EEKPSDAIDKFE) are enriched in basic and acidic residues. The BRCT domain occupies 360–476 (DPAQLFSRLT…ELKSPELYGP (117 aa)). Residues 501–659 (LEEQQSEGEA…KRRRLEKEKK (159 aa)) adopt a coiled-coil conformation. Acidic residues predominate over residues 504–566 (QQSEGEAIDA…EEGSEDEEES (63 aa)). Residues 584-619 (VKGDKKMDAKTKAKLEAKKALERKKKSEAEDLERAK) show a composition bias toward basic and acidic residues.

Belongs to the pescadillo family. As to quaternary structure, component of the NOP7 complex, composed of ERB1, NOP7 and YTM1. The complex is held together by ERB1, which interacts with NOP7 via its N-terminal domain and with YTM1 via a high-affinity interaction between the seven-bladed beta-propeller domains of the 2 proteins. The NOP7 complex associates with the 66S pre-ribosome.

It localises to the nucleus. The protein resides in the nucleolus. It is found in the nucleoplasm. Functionally, component of the NOP7 complex, which is required for maturation of the 25S and 5.8S ribosomal RNAs and formation of the 60S ribosome. The sequence is that of Pescadillo homolog from Chaetomium globosum (strain ATCC 6205 / CBS 148.51 / DSM 1962 / NBRC 6347 / NRRL 1970) (Soil fungus).